A 631-amino-acid polypeptide reads, in one-letter code: tRNA uridine 5-carboxymethylaminomethyl modification enzyme MnmG (631 aa).

14–19 is an FAD binding site; the sequence is GGGHAG. Residue 274–288 participates in NAD(+) binding; the sequence is GPRYCPSIEDKIHRF.

It belongs to the MnmG family. As to quaternary structure, homodimer. Heterotetramer of two MnmE and two MnmG subunits. FAD is required as a cofactor.

It localises to the cytoplasm. Functionally, NAD-binding protein involved in the addition of a carboxymethylaminomethyl (cmnm) group at the wobble position (U34) of certain tRNAs, forming tRNA-cmnm(5)s(2)U34. This Pseudomonas paraeruginosa (strain DSM 24068 / PA7) (Pseudomonas aeruginosa (strain PA7)) protein is tRNA uridine 5-carboxymethylaminomethyl modification enzyme MnmG.